The sequence spans 102 residues: MPSQKIRIRLKAYDHKLLDTSVGEIVDTAKRTGARVAGPIPLPTVINKYCVLRGPHVDKKSREQFEIRTHKRLIDILEPTQQTVDALMKLDLSAGVDVEIKL.

This sequence belongs to the universal ribosomal protein uS10 family. Part of the 30S ribosomal subunit.

Its function is as follows. Involved in the binding of tRNA to the ribosomes. The polypeptide is Small ribosomal subunit protein uS10 (Citrifermentans bemidjiense (strain ATCC BAA-1014 / DSM 16622 / JCM 12645 / Bem) (Geobacter bemidjiensis)).